The sequence spans 220 residues: Ribosomal RNA small subunit methyltransferase J (220 aa).

Residues 55–56 (RD), 71–72 (ER), and Asp123 each bind S-adenosyl-L-methionine.

The protein belongs to the methyltransferase superfamily. RsmJ family.

The protein resides in the cytoplasm. It carries out the reaction guanosine(1516) in 16S rRNA + S-adenosyl-L-methionine = N(2)-methylguanosine(1516) in 16S rRNA + S-adenosyl-L-homocysteine + H(+). Functionally, specifically methylates the guanosine in position 1516 of 16S rRNA. The chain is Ribosomal RNA small subunit methyltransferase J from Rhodopseudomonas palustris (strain BisB5).